The primary structure comprises 77 residues: uncharacterized protein (77 aa).

It is found in the plastid. It localises to the cyanelle. This is an uncharacterized protein from Cyanophora paradoxa.